The sequence spans 447 residues: Delta(5) fatty acid desaturase fat-4 (447 aa).

Residues 1-80 enclose the Cytochrome b5 heme-binding domain; it reads MVLREQEHEP…TQEPEIPDIK (80 aa). A run of 4 helical transmembrane segments spans residues 137–157, 257–277, 292–312, and 319–339; these read IFTILFAFYLQYHTYYLPSAI, WTFMLPFLRLSWLLQSIIFVS, IYEQVGLSLHWAWSLGQLYFL, and IMFFLVSHLVGGFLLSHVVTF.

The protein belongs to the fatty acid desaturase type 1 family.

The protein localises to the membrane. It catalyses the reaction (11Z,14Z)-eicosadienoyl-CoA + 2 Fe(II)-[cytochrome b5] + O2 + 2 H(+) = (5Z,11Z,14Z)-eicosatrienoyl-CoA + 2 Fe(III)-[cytochrome b5] + 2 H2O. It carries out the reaction (11Z,14Z,17Z)-eicosatrienoyl-CoA + 2 Fe(II)-[cytochrome b5] + O2 + 2 H(+) = (5Z,11Z,14Z,17Z)-eicosatetraenoyl-CoA + 2 Fe(III)-[cytochrome b5] + 2 H2O. The catalysed reaction is (8Z,11Z,14Z,17Z)-eicosatetraenoyl-CoA + 2 Fe(II)-[cytochrome b5] + O2 + 2 H(+) = (5Z,8Z,11Z,14Z,17Z)-eicosapentaenoyl-CoA + 2 Fe(III)-[cytochrome b5] + 2 H2O. The enzyme catalyses (8Z,11Z,14Z)-eicosatrienoyl-CoA + 2 Fe(II)-[cytochrome b5] + O2 + 2 H(+) = (5Z,8Z,11Z,14Z)-eicosatetraenoyl-CoA + 2 Fe(III)-[cytochrome b5] + 2 H2O. It functions in the pathway lipid metabolism; polyunsaturated fatty acid biosynthesis. In terms of biological role, can function as a Delta(5) fatty acid desaturase and behaves as a (8-3) desaturase. Introduces a double bond in the fatty acid chain 5 carbons away from carboxy terminal to biosynthesize polyunsaturated fatty acids (PUFAs) endogenously (PUFAs are essential for membrane structure and many cellular and physiological processes). Acts on a variety of substrates such as dihomo-gamma-linoleoyl-CoA ((8Z,11Z,14Z)-eicosatrienoyl-CoA, 20:3n-6) to generate arachidonoyl-CoA ((5Z,8Z,11Z,14Z)-eicosatetraenoyl-CoA, 20:4n-6). Also acts on a number of other substrates, including fatty acids that do not contain a double bond at the 8 position like (11Z,14Z,17Z)-eicosatrienoyl-CoA (20:3n-3) to produce (5Z,11Z,14Z,17Z)-eicosatetraenoyl-CoA (20:4n-3). Unlike plants, Caenorhabditis elegans desaturases seem to use fatty acyl-CoAs as substrates. The chain is Delta(5) fatty acid desaturase fat-4 (fat-4) from Caenorhabditis elegans.